The primary structure comprises 132 residues: uncharacterized protein (132 aa).

The first 18 residues, 1–18 (MRKIISMLFIPLFIFAMA), serve as a signal peptide directing secretion.

This is an uncharacterized protein from Aquifex aeolicus (strain VF5).